A 317-amino-acid polypeptide reads, in one-letter code: GPI-specific phospholipase A2-like PGAP3 (317 aa).

Positions 1-18 (MAPFLVLFLAGVVSASRG) are cleaved as a signal peptide. Topologically, residues 19 to 93 (DREPVYRDCV…QFHGKWPFSR (75 aa)) are lumenal. Asparagine 35 carries an N-linked (GlcNAc...) asparagine glycan. Residues 94 to 114 (FLFFQEPASALASFLNGVASL) form a helical membrane-spanning segment. The Cytoplasmic portion of the chain corresponds to 115–132 (LMLFRYRSSVPSSCQMYR). Residues 133–153 (TCLAFSMVSVNAWFWSTIFHT) form a helical membrane-spanning segment. Topologically, residues 154–163 (RDTALTEKMD) are lumenal. Residues 164–180 (YFCASSVILHSIYLCCM) traverse the membrane as a helical segment. Residues 181–189 (RTFGLQYPS) lie on the Cytoplasmic side of the membrane. Residues 190-210 (IANAFGAFLVLLFACHISYLT) traverse the membrane as a helical segment. Over 211-219 (LGRFDYSYN) the chain is Lumenal. The chain crosses the membrane as a helical span at residues 220–240 (MAANTSFGIVNLMWWLAWCMW). Residues 241 to 251 (RRFHQPYLWKC) lie on the Cytoplasmic side of the membrane. Residues 252 to 272 (VLVVVLLQSLALLELLDFPPV) form a helical membrane-spanning segment. A topological domain (lumenal) is located at residue methionine 273. A helical membrane pass occupies residues 274–293 (WILDAHALWHFSTIPLHFLF). Over 294 to 317 (YSFLRDDSLYLLKVNHDDDIPKLD) the chain is Cytoplasmic.

This sequence belongs to the PGAP3 family.

The protein resides in the golgi apparatus membrane. Its function is as follows. Involved in the fatty acid remodeling steps of GPI-anchor maturation where the unsaturated acyl chain at sn-2 of inositol phosphate is replaced by a saturated stearoyl chain. May catalyze the first step of the fatty acid remodeling, by removing the unsaturated acyl chain at sn-2 of inositol phosphate, generating a lyso-GPI intermediate. The fatty acid remodeling steps is critical for the integration of GPI-APs into lipid rafts. This chain is GPI-specific phospholipase A2-like PGAP3, found in Xenopus laevis (African clawed frog).